The sequence spans 256 residues: Protein US2 homolog (256 aa).

Disordered stretches follow at residues 100 to 120 (TRRP…SPPP), 167 to 186 (STAA…RRRP), and 236 to 256 (VRRR…CTIS). Residues 167–180 (STAAGAPGAPTGAR) are compositionally biased toward low complexity. The span at 245–256 (NGRERAPRCTIS) shows a compositional bias: basic and acidic residues.

The protein belongs to the herpesviridae US2 family.

The polypeptide is Protein US2 homolog (28K) (Sus scrofa (Pig)).